The sequence spans 105 residues: Large ribosomal subunit protein bL21 (105 aa).

The protein belongs to the bacterial ribosomal protein bL21 family. As to quaternary structure, part of the 50S ribosomal subunit. Contacts protein L20.

Functionally, this protein binds to 23S rRNA in the presence of protein L20. The chain is Large ribosomal subunit protein bL21 from Rhizobium etli (strain CIAT 652).